A 340-amino-acid polypeptide reads, in one-letter code: Replication factor C subunit 2 (340 aa).

59-66 contacts ATP; sequence GSPGTGKT.

Belongs to the activator 1 small subunits family. In terms of assembly, heteropentamer of subunits rfc1, rfc2, rfc3, rfc4 and rfc5 that forms a complex (RFC) with PCNA in the presence of ATP. Two other complexes exist where rfc1 can be replaced by either ctf18 or elg1 to form the ctf18-RFC or the elg1-RFC complexes respectively.

The protein localises to the nucleus. The elongation of primed DNA templates by DNA polymerase delta and epsilon requires the action of the accessory proteins PCNA and activator 1. Subunit 2 binds ATP and single-stranded DNA. This Schizosaccharomyces pombe (strain 972 / ATCC 24843) (Fission yeast) protein is Replication factor C subunit 2 (rfc2).